A 556-amino-acid polypeptide reads, in one-letter code: Arginine--tRNA ligase (556 aa).

The 'HIGH' region motif lies at 132–142 (ANPTGNLHLGH).

Belongs to the class-I aminoacyl-tRNA synthetase family. As to quaternary structure, monomer.

It is found in the cytoplasm. The catalysed reaction is tRNA(Arg) + L-arginine + ATP = L-arginyl-tRNA(Arg) + AMP + diphosphate. The polypeptide is Arginine--tRNA ligase (Bacillus licheniformis (strain ATCC 14580 / DSM 13 / JCM 2505 / CCUG 7422 / NBRC 12200 / NCIMB 9375 / NCTC 10341 / NRRL NRS-1264 / Gibson 46)).